A 416-amino-acid polypeptide reads, in one-letter code: Glutamyl-tRNA reductase (416 aa).

Substrate is bound by residues 49 to 52 (TCNR), Ser-105, 110 to 112 (EPQ), and Gln-116. Cys-50 serves as the catalytic Nucleophile. NADP(+) is bound at residue 185–190 (GAGETI).

This sequence belongs to the glutamyl-tRNA reductase family. In terms of assembly, homodimer.

The catalysed reaction is (S)-4-amino-5-oxopentanoate + tRNA(Glu) + NADP(+) = L-glutamyl-tRNA(Glu) + NADPH + H(+). It functions in the pathway porphyrin-containing compound metabolism; protoporphyrin-IX biosynthesis; 5-aminolevulinate from L-glutamyl-tRNA(Glu): step 1/2. Functionally, catalyzes the NADPH-dependent reduction of glutamyl-tRNA(Glu) to glutamate 1-semialdehyde (GSA). This is Glutamyl-tRNA reductase from Shewanella denitrificans (strain OS217 / ATCC BAA-1090 / DSM 15013).